The following is a 974-amino-acid chain: UvrABC system protein A (974 aa).

34-41 (GLSGSGKS) contacts ATP. 2 ABC transporter domains span residues 331–610 (WARS…TNSL) and 630–959 (ISKT…QFLK). 663 to 670 (GVSGGGKS) contributes to the ATP binding site. The C4-type zinc-finger motif lies at 762 to 788 (CEACQGDGVIKIEMHFLPDVYVTCDVC).

It belongs to the ABC transporter superfamily. UvrA family. As to quaternary structure, forms a heterotetramer with UvrB during the search for lesions.

Its subcellular location is the cytoplasm. In terms of biological role, the UvrABC repair system catalyzes the recognition and processing of DNA lesions. UvrA is an ATPase and a DNA-binding protein. A damage recognition complex composed of 2 UvrA and 2 UvrB subunits scans DNA for abnormalities. When the presence of a lesion has been verified by UvrB, the UvrA molecules dissociate. The protein is UvrABC system protein A of Brucella abortus (strain 2308).